The chain runs to 406 residues: 2,3-bisphosphoglycerate-independent phosphoglycerate mutase (406 aa).

A disordered region spans residues 156–183; sequence NLSDKISDSDPHSEGKPPEPIRPLDPSA. A compositionally biased stretch (basic and acidic residues) spans 160–174; that stretch reads KISDSDPHSEGKPPE.

The protein belongs to the BPG-independent phosphoglycerate mutase family. A-PGAM subfamily.

It catalyses the reaction (2R)-2-phosphoglycerate = (2R)-3-phosphoglycerate. It functions in the pathway carbohydrate degradation; glycolysis; pyruvate from D-glyceraldehyde 3-phosphate: step 3/5. Its function is as follows. Catalyzes the interconversion of 2-phosphoglycerate and 3-phosphoglycerate. The sequence is that of 2,3-bisphosphoglycerate-independent phosphoglycerate mutase from Thermoplasma volcanium (strain ATCC 51530 / DSM 4299 / JCM 9571 / NBRC 15438 / GSS1).